A 299-amino-acid chain; its full sequence is Acetylglutamate kinase (299 aa).

Residues 68–69 (GG), Arg90, and Asn195 contribute to the substrate site.

It belongs to the acetylglutamate kinase family. ArgB subfamily.

It is found in the cytoplasm. The catalysed reaction is N-acetyl-L-glutamate + ATP = N-acetyl-L-glutamyl 5-phosphate + ADP. The protein operates within amino-acid biosynthesis; L-arginine biosynthesis; N(2)-acetyl-L-ornithine from L-glutamate: step 2/4. Catalyzes the ATP-dependent phosphorylation of N-acetyl-L-glutamate. The sequence is that of Acetylglutamate kinase from Erythrobacter litoralis (strain HTCC2594).